A 513-amino-acid chain; its full sequence is Bone morphogenetic protein 6 (513 aa).

Residues 1–20 (MPGLGRRAQWLCWWWGLLCS) form the signal peptide. Residues 21-374 (CCGPPPLRPP…VSEVHVRTTR (354 aa)) constitute a propeptide that is removed on maturation. Disordered regions lie at residues 38-66 (AAGG…SSGF), 89-131 (LPHR…RLKS), and 145-200 (ADND…ASPL). A compositionally biased stretch (low complexity) spans 98-121 (GLQQPQPPALRQQEEQQQQQQLPR). Over residues 158 to 172 (QQSWPHEAASSSQRR) the composition is skewed to polar residues. N-linked (GlcNAc...) asparagine glycans are attached at residues asparagine 241, asparagine 269, asparagine 386, asparagine 404, and asparagine 454. A disordered region spans residues 373–398 (TRSASSRRRQQSRNRSTQSQDVARVS). 3 disulfide bridges follow: cysteine 412-cysteine 478, cysteine 441-cysteine 510, and cysteine 445-cysteine 512.

This sequence belongs to the TGF-beta family. Interacts with SOSTDC1. Interacts (when glycosylated) with type I receptor ACVR1; the interaction may induce HAMP expression. Interacts with type II receptor ACVR2B. Interacts with Hemojuvelin/HJV. Interacts with ERFE; the interaction inhibits BMP-induced transcription of HAMP. Interacts with BMPR1A/ALK3. Forms heterodimers with BMP2 in vitro; the heterodimer then binds to its receptor BMPR1A /ALK3 and may induce HAMP expression. Glycosylated at Asn-454. Glycosylation is crucial for recognition by the activin receptor type I/ACVR1.

It is found in the secreted. Growth factor of the TGF-beta superfamily that plays essential roles in many developmental processes including cartilage and bone formation. Also plays an important role in the regulation of HAMP/hepcidin expression and iron metabolism by acting as a ligand for hemojuvelin/HJV. Also acts to promote expression of HAMP, potentially via the interaction with its receptor BMPR1A/ALK3. Initiates the canonical BMP signaling cascade by associating with type I receptor ACVR1 and type II receptor ACVR2B. In turn, ACVR1 propagates signal by phosphorylating SMAD1/5/8 that travel to the nucleus and act as activators and repressors of transcription of target. Can also signal through non-canonical pathway such as TAZ-Hippo signaling cascade to modulate VEGF signaling by regulating VEGFR2 expression. The sequence is that of Bone morphogenetic protein 6 (BMP6) from Homo sapiens (Human).